Consider the following 60-residue polypeptide: Potassium channel toxin alpha-KTx 12.7 (60 aa).

The first 22 residues, 1 to 22 (MSNMPVLIITLLLFSMYISTAA), serve as a signal peptide directing secretion. 3 disulfide bridges follow: cysteine 30–cysteine 51, cysteine 36–cysteine 56, and cysteine 40–cysteine 58.

This sequence belongs to the short scorpion toxin superfamily. Potassium channel inhibitor family. Alpha-KTx 12 subfamily. Expressed by the venom gland.

It is found in the secreted. Its function is as follows. Inhibits voltage-gated potassium channels. This Lychas mucronatus (Chinese swimming scorpion) protein is Potassium channel toxin alpha-KTx 12.7.